The sequence spans 166 residues: Outer membrane protein assembly factor BamE (166 aa).

The N-terminal stretch at 1 to 18 (MKRTVFPLAVAAALTLTA) is a signal peptide. Residue Cys19 is the site of N-palmitoyl cysteine attachment. A lipid anchor (S-diacylglycerol cysteine) is attached at Cys19. The disordered stretch occupies residues 143 to 166 (LFSNDDSGEMPVKPESKPSDLLNE).

It belongs to the BamE family. As to quaternary structure, part of the Bam complex.

It localises to the cell outer membrane. Its function is as follows. Part of the outer membrane protein assembly complex, which is involved in assembly and insertion of beta-barrel proteins into the outer membrane. The protein is Outer membrane protein assembly factor BamE of Methylomonas methanica (strain DSM 25384 / MC09).